Consider the following 149-residue polypeptide: 3-hydroxyacyl-[acyl-carrier-protein] dehydratase FabZ (149 aa).

His-50 is a catalytic residue.

This sequence belongs to the thioester dehydratase family. FabZ subfamily.

The protein resides in the cytoplasm. The enzyme catalyses a (3R)-hydroxyacyl-[ACP] = a (2E)-enoyl-[ACP] + H2O. Functionally, involved in unsaturated fatty acids biosynthesis. Catalyzes the dehydration of short chain beta-hydroxyacyl-ACPs and long chain saturated and unsaturated beta-hydroxyacyl-ACPs. The chain is 3-hydroxyacyl-[acyl-carrier-protein] dehydratase FabZ from Pediococcus pentosaceus (strain ATCC 25745 / CCUG 21536 / LMG 10740 / 183-1w).